We begin with the raw amino-acid sequence, 399 residues long: S-adenosylmethionine synthase (399 aa).

Position 16 (His16) interacts with ATP. Residue Asp18 participates in Mg(2+) binding. Glu44 lines the K(+) pocket. Residues Glu57 and Gln100 each coordinate L-methionine. Residues Gln100–Asp110 form a flexible loop region. ATP contacts are provided by residues Asp174–Lys176, Arg241–Phe242, Asp250, Arg256–Lys257, Ala273, and Lys277. Asp250 contacts L-methionine. Residue Lys281 coordinates L-methionine.

This sequence belongs to the AdoMet synthase family. Homotetramer; dimer of dimers. It depends on Mg(2+) as a cofactor. K(+) is required as a cofactor.

The protein localises to the cytoplasm. It carries out the reaction L-methionine + ATP + H2O = S-adenosyl-L-methionine + phosphate + diphosphate. Its pathway is amino-acid biosynthesis; S-adenosyl-L-methionine biosynthesis; S-adenosyl-L-methionine from L-methionine: step 1/1. Functionally, catalyzes the formation of S-adenosylmethionine (AdoMet) from methionine and ATP. The overall synthetic reaction is composed of two sequential steps, AdoMet formation and the subsequent tripolyphosphate hydrolysis which occurs prior to release of AdoMet from the enzyme. The sequence is that of S-adenosylmethionine synthase from Latilactobacillus sakei subsp. sakei (strain 23K) (Lactobacillus sakei subsp. sakei).